The following is a 231-amino-acid chain: Isoprenyl transferase (231 aa).

Asp-14 is a catalytic residue. Asp-14 serves as a coordination point for Mg(2+). Residues 15–18 (GNGR), Trp-19, Arg-27, His-31, and 59–61 (STE) contribute to the substrate site. The active-site Proton acceptor is Asn-62. Residues Trp-63, Arg-65, Arg-176, and 182-184 (RIS) each bind substrate. Position 195 (Glu-195) interacts with Mg(2+).

Belongs to the UPP synthase family. Homodimer. Mg(2+) serves as cofactor.

Catalyzes the condensation of isopentenyl diphosphate (IPP) with allylic pyrophosphates generating different type of terpenoids. In Aquifex aeolicus (strain VF5), this protein is Isoprenyl transferase.